The primary structure comprises 178 residues: Large ribosomal subunit protein uL6 (178 aa).

Belongs to the universal ribosomal protein uL6 family. Part of the 50S ribosomal subunit.

This protein binds to the 23S rRNA, and is important in its secondary structure. It is located near the subunit interface in the base of the L7/L12 stalk, and near the tRNA binding site of the peptidyltransferase center. This chain is Large ribosomal subunit protein uL6, found in Streptococcus uberis (strain ATCC BAA-854 / 0140J).